We begin with the raw amino-acid sequence, 61 residues long: Potassium channel toxin alpha-KTx 3.18 (61 aa).

The signal sequence occupies residues 1–23 (MKMFFTVLVTLFVCSMIIGICEG). 3 disulfide bridges follow: cysteine 30–cysteine 50, cysteine 36–cysteine 55, and cysteine 40–cysteine 57. Lysine 60 is modified (lysine amide).

Expressed by the venom gland.

Its subcellular location is the secreted. Its function is as follows. Inhibits voltage-gated potassium channel rKv1.1/KCNA1 at nanomolar ranges (IC(50)=90 +-2 nM, reduction of current by 30% at 50 nM or toxin). This is Potassium channel toxin alpha-KTx 3.18 from Mesobuthus eupeus (Lesser Asian scorpion).